A 526-amino-acid polypeptide reads, in one-letter code: Peptide chain release factor 3 (526 aa).

Positions 9 to 277 constitute a tr-type G domain; the sequence is NKRRTFAIIS…DFVEYAPGPQ (269 aa). GTP contacts are provided by residues 18–25, 86–90, and 140–143; these read SHPDAGKT, DTPGH, and NKLD.

The protein belongs to the TRAFAC class translation factor GTPase superfamily. Classic translation factor GTPase family. PrfC subfamily.

Its subcellular location is the cytoplasm. Functionally, increases the formation of ribosomal termination complexes and stimulates activities of RF-1 and RF-2. It binds guanine nucleotides and has strong preference for UGA stop codons. It may interact directly with the ribosome. The stimulation of RF-1 and RF-2 is significantly reduced by GTP and GDP, but not by GMP. This is Peptide chain release factor 3 from Legionella pneumophila (strain Lens).